A 545-amino-acid chain; its full sequence is Glutamyl-tRNA(Gln) amidotransferase subunit B-1, chloroplastic/mitochondrial (545 aa).

The protein belongs to the GatB/GatE family. GatB subfamily. Subunit of the heterotrimeric GatCAB amidotransferase (AdT) complex, composed of A, B and C subunits.

The protein localises to the mitochondrion. The protein resides in the plastid. It is found in the chloroplast. It catalyses the reaction L-glutamyl-tRNA(Gln) + L-glutamine + ATP + H2O = L-glutaminyl-tRNA(Gln) + L-glutamate + ADP + phosphate + H(+). Allows the formation of correctly charged Gln-tRNA(Gln) through the transamidation of misacylated Glu-tRNA(Gln) in chloroplasts and mitochondria. The reaction takes place in the presence of glutamine and ATP through an activated gamma-phospho-Glu-tRNA(Gln). In Micromonas pusilla (strain CCMP1545) (Picoplanktonic green alga), this protein is Glutamyl-tRNA(Gln) amidotransferase subunit B-1, chloroplastic/mitochondrial.